We begin with the raw amino-acid sequence, 501 residues long: AKT kinase-transforming protein (501 aa).

A PH domain is found at 26 to 129 (AIVKEGWLHK…WATAIQTVAD (104 aa)). The tract at residues 135–158 (EEETMDFRSGSPSDNSGAEEMEVS) is disordered. Residues 171–429 (FEYLKLLGKG…AKEIMQHRFF (259 aa)) form the Protein kinase domain. Residues 177-185 (LGKGTFGKV) and Lys200 contribute to the ATP site. Residue Asp295 is the Proton acceptor of the active site. Tyr347 is modified (phosphotyrosine). Positions 430–501 (ANIVWQDVYE…QFSYSASGTA (72 aa)) constitute an AGC-kinase C-terminal domain. Residues 471–501 (TPPDQDDSMECVDSERRPHFPQFSYSASGTA) are disordered.

This sequence belongs to the protein kinase superfamily. AGC Ser/Thr protein kinase family. RAC subfamily. Interacts with mouse THEM4. Post-translationally, autophosphorylated on threonine and serine residues.

The catalysed reaction is L-seryl-[protein] + ATP = O-phospho-L-seryl-[protein] + ADP + H(+). It catalyses the reaction L-threonyl-[protein] + ATP = O-phospho-L-threonyl-[protein] + ADP + H(+). This chain is AKT kinase-transforming protein (V-AKT), found in Mus musculus (Mouse).